The following is a 125-amino-acid chain: MADIKAIAEQLVNLTVKEVSELATILKEEYGIEPAAAAVAVAAAPGAAGAAAEEEKTSFDVVLKSAGAAKLQVVKAVKEQCGLGLKEAKDLVDAAPSTVKEGVDKATAEALKKALEEAGAEVELK.

The protein belongs to the bacterial ribosomal protein bL12 family. Homodimer. Part of the ribosomal stalk of the 50S ribosomal subunit. Forms a multimeric L10(L12)X complex, where L10 forms an elongated spine to which 2 to 4 L12 dimers bind in a sequential fashion. Binds GTP-bound translation factors.

Its function is as follows. Forms part of the ribosomal stalk which helps the ribosome interact with GTP-bound translation factors. Is thus essential for accurate translation. This is Large ribosomal subunit protein bL12 from Porphyromonas gingivalis (strain ATCC 33277 / DSM 20709 / CIP 103683 / JCM 12257 / NCTC 11834 / 2561).